Consider the following 225-residue polypeptide: KDP operon transcriptional regulatory protein KdpE (225 aa).

Positions 3–116 (NVLIVEDEQA…ELQARLRVAL (114 aa)) constitute a Response regulatory domain. Asp52 carries the 4-aspartylphosphate modification. A DNA-binding region (ompR/PhoB-type) is located at residues 126–225 (DPLVKFSDVT…ETGIGYRFML (100 aa)).

Post-translationally, phosphorylated by KdpD.

Its subcellular location is the cytoplasm. Its function is as follows. Member of the two-component regulatory system KdpD/KdpE involved in the regulation of the kdp operon. The chain is KDP operon transcriptional regulatory protein KdpE (kdpE) from Escherichia coli (strain K12).